The chain runs to 419 residues: G-protein coupled receptor 151 (419 aa).

At 1–41 the chain is on the extracellular side; that stretch reads MLAAAFADSNSSSMNVSFAHLHFAGGYLPSDSQDWRTIIPA. Residues N10 and N15 are each glycosylated (N-linked (GlcNAc...) asparagine). Residues 42–62 form a helical membrane-spanning segment; sequence LLVAVCLVGFVGNLCVIGILL. The Cytoplasmic segment spans residues 63–71; sequence HNAWKGKPS. A helical membrane pass occupies residues 72 to 92; that stretch reads MIHSLILNLSLADLSLLLFSA. Residues 93–116 lie on the Extracellular side of the membrane; sequence PIRATAYSKSVWDLGWFVCKSSDW. C111 and C187 are oxidised to a cystine. A helical membrane pass occupies residues 117–137; it reads FIHTCMAAKSLTIVVVAKVCF. The Cytoplasmic segment spans residues 138 to 153; it reads MYASDPAKQVSIHNYT. The helical transmembrane segment at 154 to 174 threads the bilayer; that stretch reads IWSVLVAIWTVASLLPLPEWF. Residues 175–201 lie on the Extracellular side of the membrane; it reads FSTIRHHEGVEMCLVDVPAVAEEFMSM. A helical membrane pass occupies residues 202-222; that stretch reads FGKLYPLLAFGLPLFFASFYF. Over 223-252 the chain is Cytoplasmic; that stretch reads WRAYDQCKKRGTKTQNLRNQIRSKQVTVML. Residues 253-273 form a helical membrane-spanning segment; the sequence is LSIAIISALLWLPEWVAWLWV. At 274 to 286 the chain is on the extracellular side; that stretch reads WHLKAAGPAPPQG. A helical transmembrane segment spans residues 287 to 307; the sequence is FIALSQVLMFSISSANPLIFL. The Cytoplasmic segment spans residues 308–419; sequence VMSEEFREGL…EDQETGEGVK (112 aa). The interval 330-419 is disordered; that stretch reads PTVSESQETP…EDQETGEGVK (90 aa). A compositionally biased stretch (polar residues) spans 332-341; it reads VSESQETPAG. Positions 410 to 419 are enriched in acidic residues; sequence EDQETGEGVK.

This sequence belongs to the G-protein coupled receptor 1 family. In terms of tissue distribution, high expression in the spinal cord.

Its subcellular location is the cell membrane. Its function is as follows. Proton-sensing G-protein coupled receptor. The protein is G-protein coupled receptor 151 (GPR151) of Homo sapiens (Human).